The chain runs to 381 residues: Estradiol 17-beta-dehydrogenase 2 (381 aa).

Residues 4 to 24 (FASESAWLCLAAAAVLGGTLL) traverse the membrane as a helical; Signal-anchor for type II membrane protein segment. Residue 83-112 (QKAVLVTGADSGFGHGLAKHLDKLGFTVFA) participates in NAD(+) binding. S220 serves as a coordination point for substrate. Y233 (proton acceptor) is an active-site residue.

Belongs to the short-chain dehydrogenases/reductases (SDR) family. Homodimer.

It localises to the endoplasmic reticulum membrane. The enzyme catalyses 17beta-estradiol + NAD(+) = estrone + NADH + H(+). It catalyses the reaction testosterone + NAD(+) = androst-4-ene-3,17-dione + NADH + H(+). It carries out the reaction 17beta-hydroxy-5alpha-androstan-3-one + NAD(+) = 5alpha-androstan-3,17-dione + NADH + H(+). The catalysed reaction is (20S)-hydroxypregn-4-en-3-one + NAD(+) = progesterone + NADH + H(+). Catalyzes the NAD-dependent oxidation of highly active 17beta-hydroxysteroids, such as estradiol (E2), testosterone (T), and dihydrotestosterone (DHT), to their less active forms and thus regulates the biological potency of these steroids. Oxidizes estradiol to estrone, testosterone to androstenedione, and dihydrotestosterone to 5alpha-androstan-3,17-dione. Also has 20-alpha-HSD activity. This Mus musculus (Mouse) protein is Estradiol 17-beta-dehydrogenase 2 (Hsd17b2).